The following is a 217-amino-acid chain: NADPH-dependent 3-demethoxyubiquinone 3-hydroxylase, mitochondrial (217 aa).

A run of 2 repeats spans residues 48-129 (AVDQ…TALL) and 130-217 (GKEG…SERF). Positions 48–217 (AVDQIIRVDH…SAAIYLSERF (170 aa)) are 2 X approximate tandem repeats. Fe cation contacts are provided by Glu60, Glu90, His93, Glu142, Glu178, and His181. The NADH site is built by Tyr212 and Arg216.

The protein belongs to the COQ7 family. In terms of assembly, component of a multi-subunit COQ enzyme complex. Interacts with COQ8B and COQ6. Interacts with COQ9. Requires Fe cation as cofactor.

Its subcellular location is the mitochondrion inner membrane. The enzyme catalyses a 5-methoxy-2-methyl-3-(all-trans-polyprenyl)benzoquinone + NADH + O2 = a 3-demethylubiquinone + NAD(+) + H2O. Its pathway is cofactor biosynthesis; ubiquinone biosynthesis. Functionally, catalyzes the hydroxylation of the 5-methoxy-2-methyl-3-(all-trans-polyprenyl)benzoquinone at the C6 position and participates in the biosynthesis of ubiquinone. Catalyzes the reaction through a substrate-mediated reduction pathway, whereby NADH shuttles electrons to 5-methoxy-2-methyl-3-(all-trans-decaprenyl)benzoquinone, which then transfers the electrons to the two Fe(3+) centers. The binding of 5-methoxy-2-methyl-3-(all-trans-polyprenyl)benzoquinone (DMQn) mediates reduction of the diiron center by nicotinamide adenine dinucleotide (NADH) and initiates oxygen activation for subsequent DMQ hydroxylation. The physiological substrates are 5-methoxy-2-methyl-3-(all-trans-nonaprenyl)benzoquinone (DMQ(9)) and 5-methoxy-2-methyl-3-(all-trans-decaprenyl)benzoquinone (DMQ(10)), however in vitro the enzyme does not have any specificity concerning the length of the polyprenyl tail, and accepts tails of various lengths with similar efficiency. Also has a structural role in the COQ enzyme complex, stabilizing other COQ polypeptides. Involved in lifespan determination in a ubiquinone-independent manner. Plays a role in modulating mitochondrial stress responses, acting in the nucleus, perhaps via regulating gene expression, independent of its characterized mitochondrial function in ubiquinone biosynthesis. This Rattus norvegicus (Rat) protein is NADPH-dependent 3-demethoxyubiquinone 3-hydroxylase, mitochondrial.